Reading from the N-terminus, the 322-residue chain is Ribosomal RNA small subunit methyltransferase H (322 aa).

S-adenosyl-L-methionine is bound by residues 43 to 45, Asp-60, Phe-86, Asp-104, and Gln-111; that span reads GGY.

Belongs to the methyltransferase superfamily. RsmH family.

It is found in the cytoplasm. The catalysed reaction is cytidine(1402) in 16S rRNA + S-adenosyl-L-methionine = N(4)-methylcytidine(1402) in 16S rRNA + S-adenosyl-L-homocysteine + H(+). In terms of biological role, specifically methylates the N4 position of cytidine in position 1402 (C1402) of 16S rRNA. The protein is Ribosomal RNA small subunit methyltransferase H of Caulobacter sp. (strain K31).